The sequence spans 287 residues: Bifunctional protein FolD 2 (287 aa).

NADP(+) is bound by residues 166 to 168 (GAS) and Ile232.

This sequence belongs to the tetrahydrofolate dehydrogenase/cyclohydrolase family. In terms of assembly, homodimer.

The enzyme catalyses (6R)-5,10-methylene-5,6,7,8-tetrahydrofolate + NADP(+) = (6R)-5,10-methenyltetrahydrofolate + NADPH. It carries out the reaction (6R)-5,10-methenyltetrahydrofolate + H2O = (6R)-10-formyltetrahydrofolate + H(+). The protein operates within one-carbon metabolism; tetrahydrofolate interconversion. Functionally, catalyzes the oxidation of 5,10-methylenetetrahydrofolate to 5,10-methenyltetrahydrofolate and then the hydrolysis of 5,10-methenyltetrahydrofolate to 10-formyltetrahydrofolate. The protein is Bifunctional protein FolD 2 of Hydrogenovibrio crunogenus (strain DSM 25203 / XCL-2) (Thiomicrospira crunogena).